The following is a 159-amino-acid chain: MHRSHPSISRRKHLMKEMMEDDYALPTETQQIARVISSRGNNLHEVETVDETFLVSMPNKFRKSMWVKRGDFLLVEPIEEGDKVKAEICKILTPEHIKEYTKAAIWPDKFTKKPVQEEATSQNKDDSDFEDDLLPNTNRPVNRDSSDEEEDEETSSEED.

Residues 18–93 enclose the S1-like domain; sequence MMEDDYALPT…VKAEICKILT (76 aa). The interval 109–159 is disordered; the sequence is KFTKKPVQEEATSQNKDDSDFEDDLLPNTNRPVNRDSSDEEEDEETSSEED. Over residues 146 to 159 the composition is skewed to acidic residues; sequence SDEEEDEETSSEED.

Belongs to the EIF1AD family.

The chain is Probable RNA-binding protein EIF1AD from Drosophila melanogaster (Fruit fly).